Here is a 313-residue protein sequence, read N- to C-terminus: tRNA-cytidine(32) 2-sulfurtransferase (313 aa).

The PP-loop motif signature appears at 47–52 (SGGKDS). [4Fe-4S] cluster contacts are provided by cysteine 122, cysteine 125, and cysteine 213.

It belongs to the TtcA family. As to quaternary structure, homodimer. Mg(2+) is required as a cofactor. The cofactor is [4Fe-4S] cluster.

The protein localises to the cytoplasm. The enzyme catalyses cytidine(32) in tRNA + S-sulfanyl-L-cysteinyl-[cysteine desulfurase] + AH2 + ATP = 2-thiocytidine(32) in tRNA + L-cysteinyl-[cysteine desulfurase] + A + AMP + diphosphate + H(+). It participates in tRNA modification. Functionally, catalyzes the ATP-dependent 2-thiolation of cytidine in position 32 of tRNA, to form 2-thiocytidine (s(2)C32). The sulfur atoms are provided by the cysteine/cysteine desulfurase (IscS) system. In Yersinia enterocolitica serotype O:8 / biotype 1B (strain NCTC 13174 / 8081), this protein is tRNA-cytidine(32) 2-sulfurtransferase.